The sequence spans 354 residues: Magnesium-protoporphyrin IX monomethyl ester [oxidative] cyclase 2 (354 aa).

Belongs to the AcsF family. The cofactor is Fe cation.

The catalysed reaction is Mg-protoporphyrin IX 13-monomethyl ester + 3 NADPH + 3 O2 + 2 H(+) = 3,8-divinyl protochlorophyllide a + 3 NADP(+) + 5 H2O. The protein operates within porphyrin-containing compound metabolism; chlorophyll biosynthesis (light-independent). Its function is as follows. Catalyzes the formation of the isocyclic ring in chlorophyll biosynthesis. Mediates the cyclase reaction, which results in the formation of divinylprotochlorophyllide (Pchlide) characteristic of all chlorophylls from magnesium-protoporphyrin IX 13-monomethyl ester (MgPMME). The protein is Magnesium-protoporphyrin IX monomethyl ester [oxidative] cyclase 2 of Thermosynechococcus vestitus (strain NIES-2133 / IAM M-273 / BP-1).